A 132-amino-acid polypeptide reads, in one-letter code: Hemoglobin subunit beta-1 (132 aa).

Residues 1-132 (WSKIDIDVCG…VVSALGRQYH (132 aa)) enclose the Globin domain. Heme b is bound by residues His-49 and His-78.

This sequence belongs to the globin family. In terms of assembly, hb 1 is a heterotetramer of two alpha-1 and two beta-1 chains. Hb 2 is a heterotetramer of two alpha-2 and two beta-1 chains. Red blood cells.

Involved in oxygen transport from gills to the various peripheral tissues. The chain is Hemoglobin subunit beta-1 (hbb1) from Arctogadus glacialis (Arctic cod).